Reading from the N-terminus, the 254-residue chain is DNA repair protein RecO (254 aa).

It belongs to the RecO family.

Functionally, involved in DNA repair and RecF pathway recombination. The polypeptide is DNA repair protein RecO (Anaeromyxobacter dehalogenans (strain 2CP-C)).